Consider the following 159-residue polypeptide: 2-C-methyl-D-erythritol 2,4-cyclodiphosphate synthase (159 aa).

Positions 8 and 10 each coordinate a divalent metal cation. Residues 8-10 (DVH) and 34-35 (HS) contribute to the 4-CDP-2-C-methyl-D-erythritol 2-phosphate site. His42 is a binding site for a divalent metal cation. 4-CDP-2-C-methyl-D-erythritol 2-phosphate is bound by residues 56-58 (DIG), 61-65 (FPDTD), 132-135 (TTTE), Phe139, and Arg142.

The protein belongs to the IspF family. As to quaternary structure, homotrimer. A divalent metal cation is required as a cofactor.

The catalysed reaction is 4-CDP-2-C-methyl-D-erythritol 2-phosphate = 2-C-methyl-D-erythritol 2,4-cyclic diphosphate + CMP. The protein operates within isoprenoid biosynthesis; isopentenyl diphosphate biosynthesis via DXP pathway; isopentenyl diphosphate from 1-deoxy-D-xylulose 5-phosphate: step 4/6. Functionally, involved in the biosynthesis of isopentenyl diphosphate (IPP) and dimethylallyl diphosphate (DMAPP), two major building blocks of isoprenoid compounds. Catalyzes the conversion of 4-diphosphocytidyl-2-C-methyl-D-erythritol 2-phosphate (CDP-ME2P) to 2-C-methyl-D-erythritol 2,4-cyclodiphosphate (ME-CPP) with a corresponding release of cytidine 5-monophosphate (CMP). The chain is 2-C-methyl-D-erythritol 2,4-cyclodiphosphate synthase from Syntrophobacter fumaroxidans (strain DSM 10017 / MPOB).